The following is a 432-amino-acid chain: MAETVHSPIVTYASMLSLLAFCPPFVILLWYTMVHQDGSVTQTFGFFWENGVQGLINIWPRPTLIAWKIIFCYGAFEAILQLLLPGKRVEGPISPAGNRPVYKANGLAAYFVTLATYLGLWWFGIFNPAIVYDHLGEIFSALIFGSFIFCVLLYIKGHVAPSSSDSGSCGNLIIDFYWGMELYPRIGKSFDIKVFTNCRFGMMSWAVLAVTYCIKQYEINGKVSDSMLVNTILMLVYVTKFFWWEAGYWNTMDIAHDRAGFYICWGCLVWVPSVYTSPGMYLVNHPVELGTQLAIYILVAGILCIYINYDCDRQRQEFRRTNGKCLVWGRAPSKIVASYTTTSGETKTSLLLTSGWWGLARHFHYVPEILSAFFWTVPALFDNFLAYFYVIFLTLLLFDRAKRDDDRCRSKYGKYWKLYCEKVKYRIIPGIY.

Transmembrane regions (helical) follow at residues 12 to 34 (YASM…YTMV), 64 to 86 (LIAW…LLPG), 107 to 126 (LAAY…FGIF), 136 to 155 (GEIF…LLYI), 195 to 212 (FTNC…AVTY), 227 to 249 (MLVN…AGYW), 261 to 283 (FYIC…MYLV), 287 to 309 (VELG…YINY), and 371 to 393 (SAFF…VIFL).

The protein belongs to the ERG4/ERG24 family.

It is found in the endoplasmic reticulum membrane. The catalysed reaction is cholesterol + NADP(+) = 7-dehydrocholesterol + NADPH + H(+). The protein operates within lipid metabolism; steroid biosynthesis. Functionally, production of cholesterol by reduction of C7-C8 double bond of 7-dehydrocholesterol (7-DHC). Lesions in the gene coding for the enzyme cause dwarfism. The protein is 7-dehydrocholesterol reductase (DWF5) of Arabidopsis thaliana (Mouse-ear cress).